Reading from the N-terminus, the 253-residue chain is Methionine aminopeptidase (253 aa).

Residue His-78 participates in substrate binding. A divalent metal cation contacts are provided by Asp-95, Asp-106, and His-169. A substrate-binding site is contributed by His-176. A divalent metal cation is bound by residues Glu-206 and Glu-237.

It belongs to the peptidase M24A family. Methionine aminopeptidase type 1 subfamily. Monomer. Co(2+) serves as cofactor. Requires Zn(2+) as cofactor. Mn(2+) is required as a cofactor. The cofactor is Fe(2+).

It carries out the reaction Release of N-terminal amino acids, preferentially methionine, from peptides and arylamides.. Functionally, removes the N-terminal methionine from nascent proteins. The N-terminal methionine is often cleaved when the second residue in the primary sequence is small and uncharged (Met-Ala-, Cys, Gly, Pro, Ser, Thr, or Val). Requires deformylation of the N(alpha)-formylated initiator methionine before it can be hydrolyzed. In Helicobacter pylori (strain J99 / ATCC 700824) (Campylobacter pylori J99), this protein is Methionine aminopeptidase.